A 435-amino-acid chain; its full sequence is T-cell defective protein 2 (435 aa).

Positions 65–146 (NASTSFQSQP…KTPDSLRKSI (82 aa)) are disordered. The stretch at 322–352 (TKISAKKEKEQKKSAAKEAALKEAKEKEMRI) forms a coiled coil. The segment at 393–419 (FFKANPPPAPRAPQAPELASGPRRIPT) is disordered.

In terms of tissue distribution, strongly expressed in the cytoplasm of the pharynx muscle cells and several head neurons, probably the IL1s or IL2s, throughout development. Also expressed in some other unidentified neurons in the tail region. Weakly expressed in the nuclei of the T-cells and the T-cell daughters. Not expressed in gonads and in P12 cell.

It is found in the nucleus. It localises to the cytoplasm. Its function is as follows. May act synergistically with the Wnt pathways to control T-cell fate specification, gonad development, and P12 cell fate specification. Required for the distribution of pop-1 and tlp-1 proteins. In Caenorhabditis elegans, this protein is T-cell defective protein 2 (tcl-2).